The primary structure comprises 394 residues: Exodeoxyribonuclease 7 large subunit (394 aa).

Belongs to the XseA family. As to quaternary structure, heterooligomer composed of large and small subunits.

It is found in the cytoplasm. It catalyses the reaction Exonucleolytic cleavage in either 5'- to 3'- or 3'- to 5'-direction to yield nucleoside 5'-phosphates.. Functionally, bidirectionally degrades single-stranded DNA into large acid-insoluble oligonucleotides, which are then degraded further into small acid-soluble oligonucleotides. The protein is Exodeoxyribonuclease 7 large subunit of Thermotoga petrophila (strain ATCC BAA-488 / DSM 13995 / JCM 10881 / RKU-1).